The sequence spans 461 residues: Cysteine--tRNA ligase (461 aa).

C28 is a Zn(2+) binding site. Positions 30–40 match the 'HIGH' region motif; that stretch reads MTVYDYCHLGH. The Zn(2+) site is built by C212, H237, and E241. The short motif at 269–273 is the 'KMSKS' region element; sequence KMSKS. K272 contributes to the ATP binding site.

The protein belongs to the class-I aminoacyl-tRNA synthetase family. In terms of assembly, monomer. Requires Zn(2+) as cofactor.

Its subcellular location is the cytoplasm. It catalyses the reaction tRNA(Cys) + L-cysteine + ATP = L-cysteinyl-tRNA(Cys) + AMP + diphosphate. The polypeptide is Cysteine--tRNA ligase (Aromatoleum aromaticum (strain DSM 19018 / LMG 30748 / EbN1) (Azoarcus sp. (strain EbN1))).